The primary structure comprises 491 residues: Protein nucleotidyltransferase YdiU (491 aa).

ATP is bound by residues glycine 94, glycine 96, arginine 97, lysine 117, aspartate 129, glycine 130, arginine 180, and arginine 187. Residue aspartate 256 is the Proton acceptor of the active site. Positions 257 and 266 each coordinate Mg(2+). Residue aspartate 266 coordinates ATP.

Belongs to the SELO family. Mg(2+) serves as cofactor. The cofactor is Mn(2+).

It carries out the reaction L-seryl-[protein] + ATP = 3-O-(5'-adenylyl)-L-seryl-[protein] + diphosphate. It catalyses the reaction L-threonyl-[protein] + ATP = 3-O-(5'-adenylyl)-L-threonyl-[protein] + diphosphate. The catalysed reaction is L-tyrosyl-[protein] + ATP = O-(5'-adenylyl)-L-tyrosyl-[protein] + diphosphate. The enzyme catalyses L-histidyl-[protein] + UTP = N(tele)-(5'-uridylyl)-L-histidyl-[protein] + diphosphate. It carries out the reaction L-seryl-[protein] + UTP = O-(5'-uridylyl)-L-seryl-[protein] + diphosphate. It catalyses the reaction L-tyrosyl-[protein] + UTP = O-(5'-uridylyl)-L-tyrosyl-[protein] + diphosphate. Functionally, nucleotidyltransferase involved in the post-translational modification of proteins. It can catalyze the addition of adenosine monophosphate (AMP) or uridine monophosphate (UMP) to a protein, resulting in modifications known as AMPylation and UMPylation. The chain is Protein nucleotidyltransferase YdiU from Clostridium botulinum (strain Loch Maree / Type A3).